The following is a 729-amino-acid chain: Transcriptional activator ptaB (729 aa).

Positions 1–12 (MPQHPGLPPGHP) are enriched in pro residues. 4 disordered regions span residues 1–69 (MPQH…QAHA), 207–341 (AAAA…QNQA), 505–538 (LELS…SLPE), and 614–729 (RGPQ…KGTA). Low complexity predominate over residues 38 to 56 (PGGPQVTQGGPMMGMPPGA). The span at 272–285 (APQPHPTPNPPPQQ) shows a compositional bias: pro residues. Low complexity-rich tracts occupy residues 286-300 (LPQA…HQQP) and 307-341 (QPQQ…QNQA). Positions 614-625 (RGPQMNGPNQFA) are enriched in polar residues. Residues 655–671 (GPPGMVQQGQMQPNVGQ) are compositionally biased toward low complexity. Over residues 672–682 (ATSASASPQVT) the composition is skewed to polar residues.

This sequence belongs to the MFG1 family. In terms of assembly, interacts with somA.

It localises to the nucleus. Its function is as follows. Transcriptional regulator that forms a complex with somA to control biofilm formation. This Aspergillus fumigatus (strain ATCC MYA-4609 / CBS 101355 / FGSC A1100 / Af293) (Neosartorya fumigata) protein is Transcriptional activator ptaB.